Reading from the N-terminus, the 377-residue chain is Putative glutamate--cysteine ligase 2 (377 aa).

Belongs to the glutamate--cysteine ligase type 2 family. YbdK subfamily.

The catalysed reaction is L-cysteine + L-glutamate + ATP = gamma-L-glutamyl-L-cysteine + ADP + phosphate + H(+). In terms of biological role, ATP-dependent carboxylate-amine ligase which exhibits weak glutamate--cysteine ligase activity. This is Putative glutamate--cysteine ligase 2 from Ralstonia pickettii (strain 12J).